A 217-amino-acid polypeptide reads, in one-letter code: Tectonin-1 (217 aa).

6 repeat units span residues Val2 to Gly37, His38 to Asn74, Asn75 to His111, Asn112 to Gly146, Ser147 to Gly182, and Lys183 to Leu217. Positions Val2 to Leu217 are 6 X approximate tandem repeats.

It belongs to the tectonin family.

The protein localises to the cell surface. The protein resides in the cytoplasmic vesicle membrane. In terms of biological role, probably involved in bacterial recognition. May be a lectin that function as part of a transmembrane signaling complex during phagocytosis. This chain is Tectonin-1 (TECA), found in Physarum polycephalum (Slime mold).